Here is a 633-residue protein sequence, read N- to C-terminus: Phosphomethylpyrimidine synthase (633 aa).

Residues asparagine 245, methionine 274, tyrosine 303, histidine 339, 359–361 (SRG), 400–403 (DGLR), and glutamate 439 contribute to the substrate site. Histidine 443 serves as a coordination point for Zn(2+). Tyrosine 466 is a binding site for substrate. Residue histidine 507 coordinates Zn(2+). [4Fe-4S] cluster is bound by residues cysteine 587, cysteine 590, and cysteine 595.

Belongs to the ThiC family. Homodimer. Requires [4Fe-4S] cluster as cofactor.

The enzyme catalyses 5-amino-1-(5-phospho-beta-D-ribosyl)imidazole + S-adenosyl-L-methionine = 4-amino-2-methyl-5-(phosphooxymethyl)pyrimidine + CO + 5'-deoxyadenosine + formate + L-methionine + 3 H(+). It participates in cofactor biosynthesis; thiamine diphosphate biosynthesis. Functionally, catalyzes the synthesis of the hydroxymethylpyrimidine phosphate (HMP-P) moiety of thiamine from aminoimidazole ribotide (AIR) in a radical S-adenosyl-L-methionine (SAM)-dependent reaction. The polypeptide is Phosphomethylpyrimidine synthase (Neisseria gonorrhoeae (strain ATCC 700825 / FA 1090)).